The primary structure comprises 382 residues: Glutamyl-tRNA reductase (382 aa).

Residues 38–41 (TCNR), serine 85, 90–92 (ENQ), and glutamine 96 each bind substrate. Cysteine 39 acts as the Nucleophile in catalysis. 164 to 169 (GAGEMG) serves as a coordination point for NADP(+).

This sequence belongs to the glutamyl-tRNA reductase family. In terms of assembly, homodimer.

It catalyses the reaction (S)-4-amino-5-oxopentanoate + tRNA(Glu) + NADP(+) = L-glutamyl-tRNA(Glu) + NADPH + H(+). The protein operates within porphyrin-containing compound metabolism; protoporphyrin-IX biosynthesis; 5-aminolevulinate from L-glutamyl-tRNA(Glu): step 1/2. Its function is as follows. Catalyzes the NADPH-dependent reduction of glutamyl-tRNA(Glu) to glutamate 1-semialdehyde (GSA). This chain is Glutamyl-tRNA reductase, found in Methanococcus maripaludis (strain C6 / ATCC BAA-1332).